The chain runs to 205 residues: GTP cyclohydrolase-2 (205 aa).

49-53 (RLHSE) is a binding site for GTP. The Zn(2+) site is built by C54, C65, and C67. Residues Q70, 92–94 (EGR), and T114 each bind GTP. D126 (proton acceptor) is an active-site residue. R128 functions as the Nucleophile in the catalytic mechanism. GTP is bound by residues T149 and K154.

Belongs to the GTP cyclohydrolase II family. Zn(2+) is required as a cofactor.

The catalysed reaction is GTP + 4 H2O = 2,5-diamino-6-hydroxy-4-(5-phosphoribosylamino)-pyrimidine + formate + 2 phosphate + 3 H(+). The protein operates within cofactor biosynthesis; riboflavin biosynthesis; 5-amino-6-(D-ribitylamino)uracil from GTP: step 1/4. Functionally, catalyzes the conversion of GTP to 2,5-diamino-6-ribosylamino-4(3H)-pyrimidinone 5'-phosphate (DARP), formate and pyrophosphate. The chain is GTP cyclohydrolase-2 from Pseudomonas putida (strain W619).